We begin with the raw amino-acid sequence, 416 residues long: Multifunctional CCA protein (416 aa).

Residues G8 and R11 each contribute to the ATP site. G8 and R11 together coordinate CTP. Residues E21 and D23 each contribute to the Mg(2+) site. ATP is bound by residues R91, R137, and R140. CTP is bound by residues R91, R137, and R140. The HD domain occupies 228 to 329 (TGIHTLMVLK…LKLFDAVDAW (102 aa)).

It belongs to the tRNA nucleotidyltransferase/poly(A) polymerase family. Bacterial CCA-adding enzyme type 1 subfamily. Monomer. Can also form homodimers and oligomers. The cofactor is Mg(2+). Requires Ni(2+) as cofactor.

The catalysed reaction is a tRNA precursor + 2 CTP + ATP = a tRNA with a 3' CCA end + 3 diphosphate. It catalyses the reaction a tRNA with a 3' CCA end + 2 CTP + ATP = a tRNA with a 3' CCACCA end + 3 diphosphate. Catalyzes the addition and repair of the essential 3'-terminal CCA sequence in tRNAs without using a nucleic acid template. Adds these three nucleotides in the order of C, C, and A to the tRNA nucleotide-73, using CTP and ATP as substrates and producing inorganic pyrophosphate. tRNA 3'-terminal CCA addition is required both for tRNA processing and repair. Also involved in tRNA surveillance by mediating tandem CCA addition to generate a CCACCA at the 3' terminus of unstable tRNAs. While stable tRNAs receive only 3'-terminal CCA, unstable tRNAs are marked with CCACCA and rapidly degraded. The protein is Multifunctional CCA protein of Photorhabdus laumondii subsp. laumondii (strain DSM 15139 / CIP 105565 / TT01) (Photorhabdus luminescens subsp. laumondii).